The sequence spans 534 residues: Peptide chain release factor 3 (534 aa).

Residues 9–278 (ARRRTFAIIS…FFIEHAPPPQ (270 aa)) enclose the tr-type G domain. GTP-binding positions include 18–25 (SHPDAGKT), 86–90 (DTPGH), and 140–143 (NKLD).

This sequence belongs to the TRAFAC class translation factor GTPase superfamily. Classic translation factor GTPase family. PrfC subfamily.

It is found in the cytoplasm. In terms of biological role, increases the formation of ribosomal termination complexes and stimulates activities of RF-1 and RF-2. It binds guanine nucleotides and has strong preference for UGA stop codons. It may interact directly with the ribosome. The stimulation of RF-1 and RF-2 is significantly reduced by GTP and GDP, but not by GMP. The chain is Peptide chain release factor 3 from Xanthomonas oryzae pv. oryzae (strain PXO99A).